The primary structure comprises 367 residues: tRNA(Ile)-lysidine synthase (367 aa).

32–37 (SGGSDS) serves as a coordination point for ATP.

The protein belongs to the tRNA(Ile)-lysidine synthase family.

The protein resides in the cytoplasm. The enzyme catalyses cytidine(34) in tRNA(Ile2) + L-lysine + ATP = lysidine(34) in tRNA(Ile2) + AMP + diphosphate + H(+). Its function is as follows. Ligates lysine onto the cytidine present at position 34 of the AUA codon-specific tRNA(Ile) that contains the anticodon CAU, in an ATP-dependent manner. Cytidine is converted to lysidine, thus changing the amino acid specificity of the tRNA from methionine to isoleucine. This Hyphomonas neptunium (strain ATCC 15444) protein is tRNA(Ile)-lysidine synthase.